The following is a 372-amino-acid chain: Maltose/maltodextrin import ATP-binding protein MalK (372 aa).

Positions 4–234 (VSLRNVGKSY…PANRFVAGFI (231 aa)) constitute an ABC transporter domain. 36–43 (GPSGCGKS) serves as a coordination point for ATP.

Belongs to the ABC transporter superfamily. Maltooligosaccharide importer (TC 3.A.1.1.1) family. The complex is composed of two ATP-binding proteins (MalK), two transmembrane proteins (MalG and MalK) and a solute-binding protein (MalE).

The protein resides in the cell inner membrane. It catalyses the reaction D-maltose(out) + ATP + H2O = D-maltose(in) + ADP + phosphate + H(+). Functionally, part of the ABC transporter complex MalEFGK involved in maltose/maltodextrin import. Responsible for energy coupling to the transport system. The sequence is that of Maltose/maltodextrin import ATP-binding protein MalK from Mannheimia succiniciproducens (strain KCTC 0769BP / MBEL55E).